We begin with the raw amino-acid sequence, 74 residues long: Anaphase-promoting complex subunit 13 (74 aa).

The tract at residues 33–53 (LNELPDPEQDNGGTTESVKEQ) is disordered.

The protein belongs to the APC13 family. The mammalian APC/C is composed at least of 14 distinct subunits ANAPC1, ANAPC2, CDC27/APC3, ANAPC4, ANAPC5, CDC16/APC6, ANAPC7, CDC23/APC8, ANAPC10, ANAPC11, CDC26/APC12, ANAPC13, ANAPC15 and ANAPC16 that assemble into a complex of at least 19 chains with a combined molecular mass of around 1.2 MDa; APC/C interacts with FZR1 and FBXO5.

Its subcellular location is the nucleus. The protein operates within protein modification; protein ubiquitination. Functionally, component of the anaphase promoting complex/cyclosome (APC/C), a cell cycle-regulated E3 ubiquitin ligase that controls progression through mitosis and the G1 phase of the cell cycle. The APC/C complex acts by mediating ubiquitination and subsequent degradation of target proteins: it mainly mediates the formation of 'Lys-11'-linked polyubiquitin chains and, to a lower extent, the formation of 'Lys-48'- and 'Lys-63'-linked polyubiquitin chains. The APC/C complex catalyzes assembly of branched 'Lys-11'-/'Lys-48'-linked branched ubiquitin chains on target proteins. This Pongo abelii (Sumatran orangutan) protein is Anaphase-promoting complex subunit 13 (ANAPC13).